The chain runs to 257 residues: uncharacterized protein (257 aa).

Positions 1–22 (MGYLKRFALYISVMILIFAIAG) are cleaved as a signal peptide. C23 carries the N-palmitoyl cysteine lipid modification. Residue C23 is the site of S-diacylglycerol cysteine attachment.

Belongs to the staphylococcal tandem lipoprotein family.

The protein localises to the cell membrane. This is an uncharacterized protein from Staphylococcus aureus (strain USA300).